The chain runs to 267 residues: Phosphate import ATP-binding protein PstB (267 aa).

An ABC transporter domain is found at 12–251 (VSLDNVSIRY…EFDKTKNMFN (240 aa)). Residue 44 to 51 (GPSGCGKS) coordinates ATP.

The protein belongs to the ABC transporter superfamily. Phosphate importer (TC 3.A.1.7) family. As to quaternary structure, the complex is composed of two ATP-binding proteins (PstB), two transmembrane proteins (PstC and PstA) and a solute-binding protein (PstS).

It localises to the cell inner membrane. It catalyses the reaction phosphate(out) + ATP + H2O = ADP + 2 phosphate(in) + H(+). Functionally, part of the ABC transporter complex PstSACB involved in phosphate import. Responsible for energy coupling to the transport system. The chain is Phosphate import ATP-binding protein PstB from Prochlorococcus marinus (strain NATL2A).